The following is a 501-amino-acid chain: ATP synthase subunit alpha (501 aa).

Residue 169–176 coordinates ATP; the sequence is GDRQTGKT.

The protein belongs to the ATPase alpha/beta chains family. In terms of assembly, F-type ATPases have 2 components, CF(1) - the catalytic core - and CF(0) - the membrane proton channel. CF(1) has five subunits: alpha(3), beta(3), gamma(1), delta(1), epsilon(1). CF(0) has three main subunits: a(1), b(2) and c(9-12). The alpha and beta chains form an alternating ring which encloses part of the gamma chain. CF(1) is attached to CF(0) by a central stalk formed by the gamma and epsilon chains, while a peripheral stalk is formed by the delta and b chains.

The protein resides in the cell membrane. The enzyme catalyses ATP + H2O + 4 H(+)(in) = ADP + phosphate + 5 H(+)(out). Its function is as follows. Produces ATP from ADP in the presence of a proton gradient across the membrane. The alpha chain is a regulatory subunit. The sequence is that of ATP synthase subunit alpha from Streptococcus agalactiae serotype III (strain NEM316).